Consider the following 98-residue polypeptide: U10-barytoxin-Tl1a (98 aa).

Residues 1–21 (MKTLVLVAVLGVASLYLLSSA) form the signal peptide. The propeptide occupies 22-50 (SEVQQLSPAEEEFRAFVSTFGGLFETEER). 3 cysteine pairs are disulfide-bonded: cysteine 57–cysteine 71, cysteine 64–cysteine 76, and cysteine 70–cysteine 89.

It belongs to the neurotoxin 10 (Hwtx-1) family. 27 (ICK-3) subfamily. Expressed by the venom gland.

It localises to the secreted. Functionally, ion channel inhibitor. This chain is U10-barytoxin-Tl1a, found in Trittame loki (Brush-footed trapdoor spider).